The following is an 88-amino-acid chain: UPF0223 protein YktA (88 aa).

The protein belongs to the UPF0223 family.

This Bacillus subtilis (strain 168) protein is UPF0223 protein YktA (yktA).